We begin with the raw amino-acid sequence, 438 residues long: Proline--tRNA ligase (438 aa).

It belongs to the class-II aminoacyl-tRNA synthetase family. ProS type 2 subfamily. Homodimer.

The protein resides in the cytoplasm. The enzyme catalyses tRNA(Pro) + L-proline + ATP = L-prolyl-tRNA(Pro) + AMP + diphosphate. Catalyzes the attachment of proline to tRNA(Pro) in a two-step reaction: proline is first activated by ATP to form Pro-AMP and then transferred to the acceptor end of tRNA(Pro). The polypeptide is Proline--tRNA ligase (Rickettsia canadensis (strain McKiel)).